A 256-amino-acid chain; its full sequence is ATP-dependent dethiobiotin synthetase BioD (256 aa).

Residue 13 to 18 participates in ATP binding; it reads EVGKTY. T17 is a Mg(2+) binding site. K38 is an active-site residue. S42 is a binding site for substrate. Residues D56, 118–121, and 187–188 each bind ATP; these read EGAG and NR. Residues D56 and E118 each contribute to the Mg(2+) site.

Belongs to the dethiobiotin synthetase family. Homodimer. It depends on Mg(2+) as a cofactor.

It is found in the cytoplasm. The catalysed reaction is (7R,8S)-7,8-diammoniononanoate + CO2 + ATP = (4R,5S)-dethiobiotin + ADP + phosphate + 3 H(+). It functions in the pathway cofactor biosynthesis; biotin biosynthesis; biotin from 7,8-diaminononanoate: step 1/2. In terms of biological role, catalyzes a mechanistically unusual reaction, the ATP-dependent insertion of CO2 between the N7 and N8 nitrogen atoms of 7,8-diaminopelargonic acid (DAPA, also called 7,8-diammoniononanoate) to form a ureido ring. In Rhodopirellula baltica (strain DSM 10527 / NCIMB 13988 / SH1), this protein is ATP-dependent dethiobiotin synthetase BioD.